A 264-amino-acid chain; its full sequence is 3-methyl-2-oxobutanoate hydroxymethyltransferase (264 aa).

Residues Asp-45 and Asp-84 each contribute to the Mg(2+) site. Residues 45 to 46, Asp-84, and Lys-112 each bind 3-methyl-2-oxobutanoate; that span reads DS. Residue Glu-114 participates in Mg(2+) binding. The active-site Proton acceptor is the Glu-181.

It belongs to the PanB family. As to quaternary structure, homodecamer; pentamer of dimers. It depends on Mg(2+) as a cofactor.

Its subcellular location is the cytoplasm. It carries out the reaction 3-methyl-2-oxobutanoate + (6R)-5,10-methylene-5,6,7,8-tetrahydrofolate + H2O = 2-dehydropantoate + (6S)-5,6,7,8-tetrahydrofolate. It functions in the pathway cofactor biosynthesis; (R)-pantothenate biosynthesis; (R)-pantoate from 3-methyl-2-oxobutanoate: step 1/2. Functionally, catalyzes the reversible reaction in which hydroxymethyl group from 5,10-methylenetetrahydrofolate is transferred onto alpha-ketoisovalerate to form ketopantoate. The chain is 3-methyl-2-oxobutanoate hydroxymethyltransferase from Photobacterium profundum (strain SS9).